The sequence spans 118 residues: Large ribosomal subunit protein uL18 (118 aa).

The protein belongs to the universal ribosomal protein uL18 family. Part of the 50S ribosomal subunit; part of the 5S rRNA/L5/L18/L25 subcomplex. Contacts the 5S and 23S rRNAs.

This is one of the proteins that bind and probably mediate the attachment of the 5S RNA into the large ribosomal subunit, where it forms part of the central protuberance. The protein is Large ribosomal subunit protein uL18 of Rickettsia canadensis (strain McKiel).